The chain runs to 429 residues: S-adenosylmethionine synthase (429 aa).

H14 serves as a coordination point for ATP. D16 is a Mg(2+) binding site. Position 42 (E42) interacts with K(+). L-methionine is bound by residues E55 and Q98. The interval 98 to 108 (QSADINRGVDR) is flexible loop. Residues 165-167 (DAK), 252-253 (KF), D261, 267-268 (RK), A284, and K288 each bind ATP. Position 261 (D261) interacts with L-methionine. L-methionine is bound at residue K292.

The protein belongs to the AdoMet synthase family. In terms of assembly, homotetramer; dimer of dimers. Mg(2+) serves as cofactor. Requires K(+) as cofactor.

Its subcellular location is the cytoplasm. It carries out the reaction L-methionine + ATP + H2O = S-adenosyl-L-methionine + phosphate + diphosphate. Its pathway is amino-acid biosynthesis; S-adenosyl-L-methionine biosynthesis; S-adenosyl-L-methionine from L-methionine: step 1/1. In terms of biological role, catalyzes the formation of S-adenosylmethionine (AdoMet) from methionine and ATP. The overall synthetic reaction is composed of two sequential steps, AdoMet formation and the subsequent tripolyphosphate hydrolysis which occurs prior to release of AdoMet from the enzyme. This Porphyromonas gingivalis (strain ATCC 33277 / DSM 20709 / CIP 103683 / JCM 12257 / NCTC 11834 / 2561) protein is S-adenosylmethionine synthase.